A 360-amino-acid chain; its full sequence is DNA replication and repair protein RecF (360 aa).

Position 30 to 37 (30 to 37) interacts with ATP; the sequence is GQNGSGKT.

The protein belongs to the RecF family.

It localises to the cytoplasm. Functionally, the RecF protein is involved in DNA metabolism; it is required for DNA replication and normal SOS inducibility. RecF binds preferentially to single-stranded, linear DNA. It also seems to bind ATP. The sequence is that of DNA replication and repair protein RecF from Shewanella piezotolerans (strain WP3 / JCM 13877).